Consider the following 106-residue polypeptide: Toxin-like structure LSTX-D9 (106 aa).

Positions 1–20 are cleaved as a signal peptide; sequence MMKVLVVVALLLTLIIYSSS. Residues 21–41 constitute a propeptide that is removed on maturation; sequence DGIDDLEADELVSLMAHEQTR. Intrachain disulfides connect cysteine 45-cysteine 60, cysteine 52-cysteine 69, cysteine 59-cysteine 85, and cysteine 71-cysteine 83.

It belongs to the neurotoxin 19 (CSTX) family. 02 (D7) subfamily. In terms of tissue distribution, expressed by the venom gland.

The protein resides in the secreted. The polypeptide is Toxin-like structure LSTX-D9 (Lycosa singoriensis (Wolf spider)).